The primary structure comprises 546 residues: Cytokine-like nuclear factor N-PAC (546 aa).

Residues 8–66 form the PWWP domain; the sequence is LGDLVWGKLGRYPPWPGKIVNPPKDLKKPRGKKCFFVKFFGTEDHAWIKVEQLKPYHAH. Basic and acidic residues-rich tracts occupy residues 91-145 and 161-181; these read RRAK…EGKK and RAQEQSPRKRGRPPKDEKDLT. Positions 91-187 are disordered; sequence RRAKGKDQTS…KDLTIPESST (97 aa). S130 carries the post-translational modification Phosphoserine. K135 participates in a covalent cross-link: Glycyl lysine isopeptide (Lys-Gly) (interchain with G-Cter in SUMO2). The residue at position 166 (S166) is a Phosphoserine. The a.T hook DNA-binding region spans 167-179; it reads PRKRGRPPKDEKD. Residues K175, K178, K200, and K210 each participate in a glycyl lysine isopeptide (Lys-Gly) (interchain with G-Cter in SUMO2) cross-link. The interaction with histone H3 stretch occupies residues 213–216; sequence DPHF. The interaction with KDM1B stretch occupies residues 215–224; the sequence is HFHHFLLSQT. Residues K226, K236, K239, and K268 each participate in a glycyl lysine isopeptide (Lys-Gly) (interchain with G-Cter in SUMO2) cross-link. The dehydrogenase domain stretch occupies residues 260–546; that stretch reads GSITPTDKKI…MSAVYRAYIH (287 aa). 270–284 serves as a coordination point for NAD(+); that stretch reads GFLGLGLMGSGIVSN. Residue K301 forms a Glycyl lysine isopeptide (Lys-Gly) (interchain with G-Cter in SUMO2) linkage. NAD(+) is bound by residues T355 and K498. A Phosphoserine modification is found at S533.

Belongs to the HIBADH-related family. NP60 subfamily. In terms of assembly, homotetramere. Interacts with MAPK14. Interacts with KDM1B at nucleosomes; this interaction stimulates H3K4me1 and H3K4me2 demethylation. Binds to mononucleosomes. Interacts with GATA4; the interaction is required for a synergistic activation of GATA4 target genes transcription.

The protein resides in the nucleus. It localises to the chromosome. Cytokine-like nuclear factor with chromatin gene reader activity involved in chromatin modification and regulation of gene expression. Acts as a nucleosome-destabilizing factor that is recruited to genes during transcriptional activation. Recognizes and binds histone H3 without a preference for specific epigenetic markers and also binds DNA. Interacts with KDM1B and promotes its histone demethylase activity by facilitating the capture of H3 tails, they form a multifunctional enzyme complex that modifies transcribed chromatin and facilitates Pol II transcription through nucleosomes. Stimulates the acetylation of 'Lys-56' of nucleosomal histone H3 (H3K56ac) by EP300. With GATA4, co-binds a defined set of heart development genes and coregulates their expression during cardiomyocyte differentiation. Regulates p38 MAP kinase activity by mediating stress activation of MAPK14/p38alpha and specifically regulating MAPK14 signaling. Indirectly promotes phosphorylation of MAPK14 and activation of ATF2. The phosphorylation of MAPK14 requires upstream activity of MAP2K4 and MAP2K6. The sequence is that of Cytokine-like nuclear factor N-PAC from Mus musculus (Mouse).